Consider the following 1142-residue polypeptide: Potassium channel subfamily T member 2 (1142 aa).

Over Met1–Arg63 the chain is Cytoplasmic. Residues Leu64–Glu84 form a helical membrane-spanning segment. Residues Lys85–Ser101 are Extracellular-facing. N-linked (GlcNAc...) asparagine glycosylation is present at Asn99. A helical membrane pass occupies residues Leu102–Leu122. The Cytoplasmic portion of the chain corresponds to Gly123–Arg137. Residues Val138–Thr158 form a helical membrane-spanning segment. Residues Leu159–Arg160 lie on the Extracellular side of the membrane. A helical membrane pass occupies residues Asn161–Ala173. Over Lys174–Gln198 the chain is Cytoplasmic. Residues Val199–His219 traverse the membrane as a helical segment. Over Leu220–Asn228 the chain is Extracellular. Positions Leu229–Thr249 form an intramembrane region, pore-forming. At Pro250–Lys256 the chain is on the extracellular side. A helical membrane pass occupies residues Leu257–Leu277. The Cytoplasmic portion of the chain corresponds to Ala278–Leu1142. RCK N-terminal domains lie at Glu299–Val435 and Asn725–Leu865. Disordered stretches follow at residues Asp989–Thr1044 and Pro1118–Leu1142. The span at Leu1017–Gly1037 shows a compositional bias: basic residues. Polar residues predominate over residues Pro1118–Cys1129.

It belongs to the potassium channel family. Calcium-activated (TC 1.A.1.3) subfamily. KCa4.2/KCNT2 sub-subfamily. As to quaternary structure, homotetramer. Forms heteromer with KCNT1; heteromeric channels differ from those of homomeric channels in their unitary conductance, kinetic behavior, subcellular localization, and response to activation of protein kinase C. In terms of processing, phosphorylated by protein kinase C. Phosphorylation of the C-terminal domain inhibits channel activity. As to expression, detected in brain, and at low levels in heart. Detected in brainstem, including auditory neurons such as the medial nucleus of the trapezoid body. Detected in the olfactory bulb, red nucleus, facial nucleus, pontine nucleus, oculomotor nucleus, substantia nigra, deep cerebellar nuclei, vestibular nucleus, and the thalamus. Detected in hippocampal CA1, CA2, and CA3 regions, the dentate gyrus, supraoptic nucleus, hypothalamus, dorsal root ganglion, and cortical layers II, III, and V. Detected in striatum cholinergic interneurons.

It is found in the cell membrane. The catalysed reaction is K(+)(in) = K(+)(out). Its activity is regulated as follows. Are normally in a closed state unless activated by an increase in intracellular Na(+) and Cl(-). Inhibited upon stimulation of G-protein coupled receptors, such as CHRM1 and GRM1. There is conflicting data about the effect of ATP on KNCT2 channels activity. Intracellular ATP was initially report to inhibit the channel activity. However, others studies conclude that KNCT2 channels are not inhibited by intracellular ATP. Functionally, sodium-activated and chloride-activated potassium channel. Produces rapidly activating outward rectifier K(+) currents. Contributes to regulate neuronal excitability. The polypeptide is Potassium channel subfamily T member 2 (Kcnt2) (Rattus norvegicus (Rat)).